A 230-amino-acid chain; its full sequence is 7-cyano-7-deazaguanine synthase (230 aa).

Leucine 16–valine 26 contacts ATP. Positions 195, 205, 208, and 211 each coordinate Zn(2+).

The protein belongs to the QueC family. It depends on Zn(2+) as a cofactor.

The enzyme catalyses 7-carboxy-7-deazaguanine + NH4(+) + ATP = 7-cyano-7-deazaguanine + ADP + phosphate + H2O + H(+). The protein operates within purine metabolism; 7-cyano-7-deazaguanine biosynthesis. Its function is as follows. Catalyzes the ATP-dependent conversion of 7-carboxy-7-deazaguanine (CDG) to 7-cyano-7-deazaguanine (preQ(0)). In Pseudomonas fluorescens (strain Pf0-1), this protein is 7-cyano-7-deazaguanine synthase.